Here is a 406-residue protein sequence, read N- to C-terminus: Argininosuccinate synthase (406 aa).

8-16 lines the ATP pocket; sequence AYSGGLDTS. An L-citrulline-binding site is contributed by Tyr-86. Gly-116 provides a ligand contact to ATP. Residues Thr-118, Asn-122, and Asp-123 each contribute to the L-aspartate site. Asn-122 contributes to the L-citrulline binding site. Residues Arg-126, Ser-174, Glu-259, and Tyr-271 each contribute to the L-citrulline site.

It belongs to the argininosuccinate synthase family. Type 1 subfamily. Homotetramer.

The protein localises to the cytoplasm. The enzyme catalyses L-citrulline + L-aspartate + ATP = 2-(N(omega)-L-arginino)succinate + AMP + diphosphate + H(+). Its pathway is amino-acid biosynthesis; L-arginine biosynthesis; L-arginine from L-ornithine and carbamoyl phosphate: step 2/3. The chain is Argininosuccinate synthase from Lacticaseibacillus paracasei (strain ATCC 334 / BCRC 17002 / CCUG 31169 / CIP 107868 / KCTC 3260 / NRRL B-441) (Lactobacillus paracasei).